The chain runs to 45 residues: Large ribosomal subunit protein bL34 (45 aa).

Positions 1–45 are disordered; sequence MTKRTFGGTSRKRKRVSGFRVRMRSHTGRRVIRTRRKRGRSRLAA. Over residues 10–45 the composition is skewed to basic residues; the sequence is SRKRKRVSGFRVRMRSHTGRRVIRTRRKRGRSRLAA.

Belongs to the bacterial ribosomal protein bL34 family.

The sequence is that of Large ribosomal subunit protein bL34 from Synechococcus sp. (strain CC9311).